Consider the following 196-residue polypeptide: Peptidyl-tRNA hydrolase (196 aa).

Tyr14 is a tRNA binding site. Catalysis depends on His19, which acts as the Proton acceptor. Residues Phe64, Asn66, and Asn112 each coordinate tRNA.

It belongs to the PTH family. As to quaternary structure, monomer.

It localises to the cytoplasm. The enzyme catalyses an N-acyl-L-alpha-aminoacyl-tRNA + H2O = an N-acyl-L-amino acid + a tRNA + H(+). Hydrolyzes ribosome-free peptidyl-tRNAs (with 1 or more amino acids incorporated), which drop off the ribosome during protein synthesis, or as a result of ribosome stalling. In terms of biological role, catalyzes the release of premature peptidyl moieties from peptidyl-tRNA molecules trapped in stalled 50S ribosomal subunits, and thus maintains levels of free tRNAs and 50S ribosomes. This is Peptidyl-tRNA hydrolase from Solibacter usitatus (strain Ellin6076).